The following is a 497-amino-acid chain: Cytochrome P450 71A20 (497 aa).

Residues 3 to 23 form a helical membrane-spanning segment; it reads MILITLCLTTLLALLLKSILK. Cys440 is a heme binding site.

This sequence belongs to the cytochrome P450 family. It depends on heme as a cofactor.

The protein localises to the membrane. The protein is Cytochrome P450 71A20 (CYP71A20) of Arabidopsis thaliana (Mouse-ear cress).